Here is a 301-residue protein sequence, read N- to C-terminus: Amine sulfotransferase (301 aa).

3'-phosphoadenylyl sulfate is bound at residue 46-51 (KSGTVW). The Proton acceptor role is filled by histidine 101. Residues arginine 123, serine 131, tyrosine 186, 220–225 (ATFENM), and 252–254 (RKG) each bind 3'-phosphoadenylyl sulfate.

The protein belongs to the sulfotransferase 1 family. Expressed in male liver.

The protein localises to the cytoplasm. It catalyses the reaction a primary amine + 3'-phosphoadenylyl sulfate = a sulfamate + adenosine 3',5'-bisphosphate + 2 H(+). Functionally, sulfotransferase that utilizes 3'-phospho-5'-adenylyl sulfate (PAPS) as sulfonate donor to catalyze the N-sulfonation of amines (PTHP, aniline, 4-chloroaniline, 2-naphthylamine). The chain is Amine sulfotransferase (SULT3A1) from Oryctolagus cuniculus (Rabbit).